The sequence spans 358 residues: MFRKKMLVLALFSIYFLSIEAVRNESFPALLAFGDSMVDTGNNNYLLTLMKGNYWPYGWNFDSKIPTGRFGNGRVFSDVVGIILKSSLQCFFVISAEGLGIKRIVPAYRKLYIAPSDLKTGVSFASGGAGVDPVTSKLLRVLSPADQVKDFKGYKRKLKGVVGRSKAKKIVANSVILVSEGNNDIGITYAIHDAGMRLMTPKVYTSKLVGWNKKFIKDLYDHGARKFAVMGVIPLGCLPMSRLIFGGFFVWCNFLANTISEDYNKKLKSGIKSWRGASDFRGARFVYVDMYNSLMDVINNHRKYGFTHEKNGCCCMLTAIVPCSNPDKYVFYDFAHPSEKAYKTIAKKLVEDIKTGLA.

An N-terminal signal peptide occupies residues 1 to 21 (MFRKKMLVLALFSIYFLSIEA). N-linked (GlcNAc...) asparagine glycosylation is present at asparagine 24. Residue serine 36 is the Nucleophile of the active site. Residues aspartate 333 and histidine 336 contribute to the active site.

The protein belongs to the 'GDSL' lipolytic enzyme family. As to expression, flower buds.

It is found in the secreted. The protein is GDSL esterase/lipase EXL5 (EXL5) of Arabidopsis thaliana (Mouse-ear cress).